The sequence spans 136 residues: UPF0225 protein Mpe_A2093 (136 aa).

The protein belongs to the UPF0225 family.

This chain is UPF0225 protein Mpe_A2093, found in Methylibium petroleiphilum (strain ATCC BAA-1232 / LMG 22953 / PM1).